The sequence spans 179 residues: Deoxyuridine 5'-triphosphate nucleotidohydrolase (179 aa).

Residues 90-92 (RSG), N103, 107-109 (TVD), and K117 contribute to the substrate site.

Belongs to the dUTPase family. Requires Mg(2+) as cofactor.

It carries out the reaction dUTP + H2O = dUMP + diphosphate + H(+). Its pathway is pyrimidine metabolism; dUMP biosynthesis; dUMP from dCTP (dUTP route): step 2/2. Functionally, this enzyme is involved in nucleotide metabolism: it produces dUMP, the immediate precursor of thymidine nucleotides and it decreases the intracellular concentration of dUTP so that uracil cannot be incorporated into DNA. This chain is Deoxyuridine 5'-triphosphate nucleotidohydrolase, found in Thermobifida fusca (strain YX).